The chain runs to 338 residues: MSKKSENQPCMVCGEISYSIRFGAVSCRACAEFFRRKIVSKARIPKRCNGACDLGKYHRKTCQSCRFQKCLKIGMLEKVVASRTPVNRRSENNQTILSGLEKAYDKLENSRDNVFDRKNKIPKYCNHQELDDMFEIDIKLISTHFIQFFESKSSLENNQNKVLSTHFIIRFSLLEVAFRAFGKPTYILPNNDIIDVSKLDKVYQHLETGEDERGKNSQVILQRFWQMNEKTMKTEVFPVNLDQSEFLFLCALIYWDFGIENQSEKCLEECQRMRTQVLKELTEYEKSNYPENELRVAQVIGILQALQKTLDVIQHSGYISNVYNLKGKQCPLYEATNE.

Positions 7–82 (NQPCMVCGEI…IGMLEKVVAS (76 aa)) form a DNA-binding region, nuclear receptor. The NR C4-type zinc-finger motif lies at 10 to 30 (CMVCGEISYSIRFGAVSCRAC). Residues 46–65 (KRCNGACDLGKYHRKTCQSC) form an NR C4-type; degenerate zinc finger. The region spanning 92-338 (NNQTILSGLE…QCPLYEATNE (247 aa)) is the NR LBD domain.

Belongs to the nuclear hormone receptor family.

Its subcellular location is the nucleus. In terms of biological role, orphan nuclear receptor. The polypeptide is Nuclear hormone receptor family member nhr-108 (nhr-108) (Caenorhabditis elegans).